We begin with the raw amino-acid sequence, 154 residues long: uncharacterized protein (154 aa).

5 helical membrane passes run 5–24 (TLII…GVLL), 29–48 (FYAA…IYAA), 53–75 (PVVV…AIAA), 87–109 (IFWV…SMAV), and 124–146 (ATDY…LSAI).

It is found in the cell membrane. This is an uncharacterized protein from Archaeoglobus fulgidus (strain ATCC 49558 / DSM 4304 / JCM 9628 / NBRC 100126 / VC-16).